Here is a 108-residue protein sequence, read N- to C-terminus: uncharacterized protein (108 aa).

This is an uncharacterized protein from Acanthamoeba polyphaga mimivirus (APMV).